The chain runs to 742 residues: 5-methyltetrahydropteroyltriglutamate--homocysteine methyltransferase (742 aa).

5-methyltetrahydropteroyltri-L-glutamate contacts are provided by residues 18–21 (REWK) and Lys112. L-homocysteine is bound by residues 420–422 (IGS) and Glu473. L-methionine contacts are provided by residues 420 to 422 (IGS) and Glu473. Trp550 contributes to the 5-methyltetrahydropteroyltri-L-glutamate binding site. Asp588 contacts L-homocysteine. Asp588 contributes to the L-methionine binding site. Glu594 contributes to the 5-methyltetrahydropteroyltri-L-glutamate binding site. Residues His630, Cys632, and Glu654 each contribute to the Zn(2+) site. The active-site Proton donor is the His683. Cys715 is a Zn(2+) binding site.

This sequence belongs to the vitamin-B12 independent methionine synthase family. The cofactor is Zn(2+).

The catalysed reaction is 5-methyltetrahydropteroyltri-L-glutamate + L-homocysteine = tetrahydropteroyltri-L-glutamate + L-methionine. It participates in amino-acid biosynthesis; L-methionine biosynthesis via de novo pathway; L-methionine from L-homocysteine (MetE route): step 1/1. Its function is as follows. Catalyzes the transfer of a methyl group from 5-methyltetrahydrofolate to homocysteine resulting in methionine formation. This Staphylococcus aureus (strain MRSA252) protein is 5-methyltetrahydropteroyltriglutamate--homocysteine methyltransferase.